A 20-amino-acid chain; its full sequence is Hongotoxin-5 (20 aa).

The protein belongs to the short scorpion toxin superfamily. Potassium channel inhibitor family. Alpha-KTx 02 subfamily. As to expression, expressed by the venom gland.

The protein resides in the secreted. In terms of biological role, potent selective inhibitor of Kv1/KCNA voltage-gated potassium channels. The chain is Hongotoxin-5 from Centruroides limbatus (Bark scorpion).